A 1283-amino-acid chain; its full sequence is 5-oxoprolinase PfmaA (1283 aa).

Residues 1256–1283 (NTPGGGAWGKPEGDADGYREEDQAGDGI) are disordered. Positions 1266-1277 (PEGDADGYREED) are enriched in basic and acidic residues.

This sequence belongs to the oxoprolinase family. As to quaternary structure, homodimer.

The catalysed reaction is 5-oxo-L-proline + ATP + 2 H2O = L-glutamate + ADP + phosphate + H(+). Its function is as follows. 5-oxoprolinase; part of the gene cluster that mediates the biosynthesis of dihydroxynaphthalene (DHN)-melanin, a bluish-green pigment forming a dark layer in the conidial wall that protects the conidia from UV radiations. The first step of the pathway is the production of the pentaketide 1,3,6,8-tetrahydroxynaphthalene (1,3,6,8-THN or T4HN) by the polyketide synthase PfmaE though condensation of acetyl-CoA with malonyl-CoA. T4HN is not stable and easily oxidizes into the stable form flaviolin. T4HN is also substrate of the hydroxynaphthalene reductase PfmaG to yield scytalone. The scytalone dehydratase PfmaJ then reduces scytalone to 1,3,8-THN. 1,3,8-THN is then substrate of the hydroxynaphthalene reductase PfmaI to yield vermelone. Vermelone is further converted by the multicopper oxidase PfmaD to 1,8-DHN. Finally the laccase PFICI_06862 transforms 1,8-DHN to DHN-melanin. The roles of the 5-oxoprolinase PfmaA and the proline iminopeptidase PfmaB within the cluster have not been elucidated yet. The protein is 5-oxoprolinase PfmaA of Pestalotiopsis fici (strain W106-1 / CGMCC3.15140).